A 775-amino-acid chain; its full sequence is MAEQLLPQALYLSNMRKAVKIRERTPEDIFKPTNGIIYHFKTMHRYTLEMFRTCQFCPQFREIIHKALIDRSVQASLESQKKLNWCREVRKLVALKTNGDGNCLMHAACQYMWGVQDTDLVLRKALCSTLKETDTRNFKFRWQLESLKSQEFVETGLCYDTRNWNDEWDNLVKMASADTPAARSGLQYNSLEEIHIFVLSNILRRPIIVISDKMLRSLESGSNFAPLKVGGIYLPLHWPAQECYRYPIVLGYDSQHFVPLVTLKDSGPELRAVPLVNRDRGRFEDLKVHFLTDPENEMKEKLLKEYLIVMEIPVQGWDHGTTHLINAAKLDEANLPKEINLVDDYFELVQHEYKKWQENSDQARRAAHAQNPLEPSTPQLSLMDIKCETPNCPFFMSVNTQPLCHECSERRQKNQSKLPKLNSKLGPEGLPGVGLGSSNWSPEETAGGPHSAPPTAPSLFLFSETTAMKCRSPGCPFTLNVQHNGFCERCHARQINASHTADPGKCQACLQDVTRTFNGICSTCFKRTTAEPSSSLTSSIPASCHQRSKSDPSQLIQSLTPHSCHRTGNVSPSGCLSQAARTPGDRAGTSKCRKAGCMYFGTPENKGFCTLCFIEYRENKQSVTASEKAGSPAPRFQNNVPCLGRECGTLGSTMFEGYCQKCFIEAQNQRFHEARRTEEQLRSSQHRDMPRTTQVASRLKCARASCKNILACRSEELCMECQHLSQRVGSVAHRGEPTPEEPPKQRCRAPACDHFGNAKCNGYCNECYQFKQMYG.

A2 is modified (N-acetylalanine). The interval 58-300 (PQFREIIHKA…LTDPENEMKE (243 aa)) is TRAF-binding. The OTU domain occupies 92–263 (LVALKTNGDG…SQHFVPLVTL (172 aa)). D100 is an active-site residue. The Nucleophile role is filled by C103. Interaction with ubiquitin stretches follow at residues 157–159 (LCY), 190–192 (SLE), and 224–227 (FAPL). H256 (proton acceptor) is an active-site residue. An interaction with TNIP1 region spans residues 369-775 (AQNPLEPSTP…ECYQFKQMYG (407 aa)). Residues 381-416 (SLMDIKCETPNCPFFMSVNTQPLCHECSERRQKNQS) form an A20-type 1 zinc finger. Positions 386 to 445 (KCETPNCPFFMSVNTQPLCHECSERRQKNQSKLPKLNSKLGPEGLPGVGLGSSNWSPEET) are interaction with RIPK1. Residues C387, C392, C404, and C407 each coordinate Zn(2+). Positions 415–455 (QSKLPKLNSKLGPEGLPGVGLGSSNWSPEETAGGPHSAPPT) are disordered. S451 is modified (phosphoserine). A20-type zinc fingers lie at residues 464–499 (ETTA…NASH) and 500–533 (TADP…AEPS). 8 residues coordinate Zn(2+): C470, C475, C487, C490, C506, C509, C521, and C524. The segment covering 567–580 (TGNVSPSGCLSQAA) has biased composition (polar residues). Residues 567–590 (TGNVSPSGCLSQAARTPGDRAGTS) form a disordered region. 4 A20-type zinc fingers span residues 586-621 (RAGT…ENKQ), 636-671 (FQNN…NQRF), 695-730 (VASR…RVGS), and 741-775 (EPPK…QMYG). The tract at residues 590–640 (SKCRKAGCMYFGTPENKGFCTLCFIEYRENKQSVTASEKAGSPAPRFQNNV) is required for proteasomal degradation of UBE2N and UBE2D3, TRAF6 deubiquitination, and TAX1BP1 interaction with UBE2N. Residues 591 to 775 (KCRKAGCMYF…ECYQFKQMYG (185 aa)) are sufficient for inhibitory activity of TNF-induced NF-kappa-B activity. The Zn(2+) site is built by C592, C597, C609, C612, C642, C647, C659, C662, C701, C706, C718, C721, C747, C752, C764, and C767. Residues 682–775 (RSSQHRDMPR…ECYQFKQMYG (94 aa)) form a required for lysosomal localization and for TRAF2 lysosomal degradation region.

This sequence belongs to the peptidase C64 family. As to quaternary structure, homodimer. Interacts with TNIP1, TAX1BP1 and TRAF2. Interacts with RNF11, ITCH and TAX1BP1 only after TNF stimulation; these interaction are transient and they are lost after 1 hour of stimulation with TNF. Interacts with YWHAZ and YWHAH. Interacts with IKBKG; the interaction is induced by TNF stimulation and by polyubiquitin. Interacts with RIPK1. Interacts with UBE2N; the interaction requires TAX1BP1. Interacts with TRAF6. Found in most tissues during development. Strikingly high levels are found in lymphoid organs, including the thymus, spleen, and gut-associated lymphoid tissue. Constitutively expressed in immature and mature thymocyte subpopulations as well as in resting peripheral T-cells; activation of these leads to down-regulation.

It localises to the cytoplasm. The protein localises to the nucleus. It is found in the lysosome. It catalyses the reaction Thiol-dependent hydrolysis of ester, thioester, amide, peptide and isopeptide bonds formed by the C-terminal Gly of ubiquitin (a 76-residue protein attached to proteins as an intracellular targeting signal).. Ubiquitin-editing enzyme that contains both ubiquitin ligase and deubiquitinase activities. Involved in immune and inflammatory responses signaled by cytokines, such as TNF-alpha and IL-1 beta, or pathogens via Toll-like receptors (TLRs) through terminating NF-kappa-B activity. Essential component of a ubiquitin-editing protein complex, comprising also RNF11, ITCH and TAX1BP1, that ensures the transient nature of inflammatory signaling pathways. In cooperation with TAX1BP1 promotes disassembly of E2-E3 ubiquitin protein ligase complexes in IL-1R and TNFR-1 pathways; affected are at least E3 ligases TRAF6, TRAF2 and BIRC2, and E2 ubiquitin-conjugating enzymes UBE2N and UBE2D3. In cooperation with TAX1BP1 promotes ubiquitination of UBE2N and proteasomal degradation of UBE2N and UBE2D3. Upon TNF stimulation, deubiquitinates 'Lys-63'-polyubiquitin chains on RIPK1 and catalyzes the formation of 'Lys-48'-polyubiquitin chains. This leads to RIPK1 proteasomal degradation and consequently termination of the TNF- or LPS-mediated activation of NF-kappa-B. Deubiquitinates TRAF6 probably acting on 'Lys-63'-linked polyubiquitin. Upon T-cell receptor (TCR)-mediated T-cell activation, deubiquitinates 'Lys-63'-polyubiquitin chains on MALT1 thereby mediating disassociation of the CBM (CARD11:BCL10:MALT1) and IKK complexes and preventing sustained IKK activation. Deubiquitinates NEMO/IKBKG; the function is facilitated by TNIP1 and leads to inhibition of NF-kappa-B activation. Upon stimulation by bacterial peptidoglycans, probably deubiquitinates RIPK2. Can also inhibit I-kappa-B-kinase (IKK) through a non-catalytic mechanism which involves polyubiquitin; polyubiquitin promotes association with IKBKG and prevents IKK MAP3K7-mediated phosphorylation. Targets TRAF2 for lysosomal degradation. In vitro able to deubiquitinate 'Lys-11'-, 'Lys-48'- and 'Lys-63' polyubiquitin chains. Inhibitor of programmed cell death. Has a role in the function of the lymphoid system. Required for LPS-induced production of pro-inflammatory cytokines and IFN beta in LPS-tolerized macrophages. The chain is Tumor necrosis factor alpha-induced protein 3 (Tnfaip3) from Mus musculus (Mouse).